The chain runs to 144 residues: Large ribosomal subunit protein uL13 (144 aa).

This sequence belongs to the universal ribosomal protein uL13 family. In terms of assembly, part of the 50S ribosomal subunit.

Its function is as follows. This protein is one of the early assembly proteins of the 50S ribosomal subunit, although it is not seen to bind rRNA by itself. It is important during the early stages of 50S assembly. In Clostridium perfringens (strain ATCC 13124 / DSM 756 / JCM 1290 / NCIMB 6125 / NCTC 8237 / Type A), this protein is Large ribosomal subunit protein uL13.